Here is a 363-residue protein sequence, read N- to C-terminus: 3,4-dihydroxy-2-butanone 4-phosphate synthase (363 aa).

Positions 1-202 (MSHISPIPEI…ITDLIEYRSR (202 aa)) are DHBP synthase. Residues 28 to 29 (RE), Asp-33, 141 to 145 (RAGHT), and Glu-165 contribute to the D-ribulose 5-phosphate site. Glu-29 is a Mg(2+) binding site. Position 144 (His-144) interacts with Mg(2+). The tract at residues 205–363 (SLLEDMGNAP…EVVGFEEAEK (159 aa)) is GTP cyclohydrolase II-like.

In the N-terminal section; belongs to the DHBP synthase family. The protein in the C-terminal section; belongs to the GTP cyclohydrolase II family. Requires Mg(2+) as cofactor. Mn(2+) serves as cofactor.

The catalysed reaction is D-ribulose 5-phosphate = (2S)-2-hydroxy-3-oxobutyl phosphate + formate + H(+). It participates in cofactor biosynthesis; riboflavin biosynthesis; 2-hydroxy-3-oxobutyl phosphate from D-ribulose 5-phosphate: step 1/1. Functionally, catalyzes the conversion of D-ribulose 5-phosphate to formate and 3,4-dihydroxy-2-butanone 4-phosphate. The polypeptide is 3,4-dihydroxy-2-butanone 4-phosphate synthase (ribB) (Neisseria meningitidis serogroup A / serotype 4A (strain DSM 15465 / Z2491)).